The sequence spans 761 residues: Phosphoribosylformylglycinamidine synthase subunit PurL (761 aa).

The active site involves histidine 48. ATP-binding residues include tyrosine 51 and lysine 90. Glutamate 92 lines the Mg(2+) pocket. Substrate is bound by residues 93-96 and arginine 115; that span reads SHNH. Catalysis depends on histidine 94, which acts as the Proton acceptor. Aspartate 116 is a Mg(2+) binding site. Residue glutamine 239 participates in substrate binding. Aspartate 267 lines the Mg(2+) pocket. 311 to 313 is a binding site for substrate; it reads ESQ. The ATP site is built by aspartate 499 and glycine 536. Asparagine 537 is a Mg(2+) binding site. Residue serine 539 participates in substrate binding.

The protein belongs to the FGAMS family. As to quaternary structure, monomer. Part of the FGAM synthase complex composed of 1 PurL, 1 PurQ and 2 PurS subunits.

The protein resides in the cytoplasm. It catalyses the reaction N(2)-formyl-N(1)-(5-phospho-beta-D-ribosyl)glycinamide + L-glutamine + ATP + H2O = 2-formamido-N(1)-(5-O-phospho-beta-D-ribosyl)acetamidine + L-glutamate + ADP + phosphate + H(+). Its pathway is purine metabolism; IMP biosynthesis via de novo pathway; 5-amino-1-(5-phospho-D-ribosyl)imidazole from N(2)-formyl-N(1)-(5-phospho-D-ribosyl)glycinamide: step 1/2. Functionally, part of the phosphoribosylformylglycinamidine synthase complex involved in the purines biosynthetic pathway. Catalyzes the ATP-dependent conversion of formylglycinamide ribonucleotide (FGAR) and glutamine to yield formylglycinamidine ribonucleotide (FGAM) and glutamate. The FGAM synthase complex is composed of three subunits. PurQ produces an ammonia molecule by converting glutamine to glutamate. PurL transfers the ammonia molecule to FGAR to form FGAM in an ATP-dependent manner. PurS interacts with PurQ and PurL and is thought to assist in the transfer of the ammonia molecule from PurQ to PurL. In Thermosynechococcus vestitus (strain NIES-2133 / IAM M-273 / BP-1), this protein is Phosphoribosylformylglycinamidine synthase subunit PurL.